Consider the following 184-residue polypeptide: GTP cyclohydrolase 1 (184 aa).

Residues Cys-75, His-78, and Cys-146 each contribute to the Zn(2+) site.

Belongs to the GTP cyclohydrolase I family. In terms of assembly, homomer.

The catalysed reaction is GTP + H2O = 7,8-dihydroneopterin 3'-triphosphate + formate + H(+). Its pathway is cofactor biosynthesis; 7,8-dihydroneopterin triphosphate biosynthesis; 7,8-dihydroneopterin triphosphate from GTP: step 1/1. The chain is GTP cyclohydrolase 1 from Coxiella burnetii (strain Dugway 5J108-111).